The sequence spans 582 residues: Semenogelin-2 (582 aa).

The signal sequence occupies residues 1–23; sequence MKSIILFVLSLLLILEKQAAVMG. 5 disordered regions span residues 25-62, 131-156, 173-192, 272-477, and 502-554; these read KGGS…SKGS, KGGQ…KGIF, KEQA…GSQS, NLNQ…EQRQ, and VEGK…SGAH. The segment covering 50 to 59 has biased composition (basic and acidic residues); the sequence is GQKDKQHTES. Polar residues-rich tracts occupy residues 137 to 151 and 174 to 192; these read HGTQ…NSPS and EQAS…GSQS. A compositionally biased stretch (basic and acidic residues) spans 292–310; it reads RTEERQLNHGEKSVQKDVS. The segment covering 325-335 has biased composition (polar residues); that stretch reads KSQNQVTIPSQ. A compositionally biased stretch (basic and acidic residues) spans 336-345; the sequence is DQEHGHKENK. Polar residues predominate over residues 385–395; sequence KSQNQVTIPSQ. Basic and acidic residues predominate over residues 396-405; the sequence is DQEHGHKENK. Positions 445–455 are enriched in polar residues; the sequence is KSQNQVTIPSQ. A compositionally biased stretch (basic and acidic residues) spans 456–465; that stretch reads DQEHGHKENK. Polar residues-rich tracts occupy residues 466 to 477 and 506 to 529; these read ISYQSSSTEQRQ and SQIQ…NSGK. Residues 537–546 are compositionally biased toward basic and acidic residues; it reads LLSHEQEGRY.

The protein belongs to the semenogelin family. Interacts with SERPINA5.

The protein localises to the secreted. Participates in the formation of a gel matrix (sperm coagulum) entrapping the accessory gland secretions and ejaculated spermatozoa. This Macaca nemestrina (Pig-tailed macaque) protein is Semenogelin-2 (SEMG2).